The chain runs to 438 residues: MPFRIAFLKQPFEDFFKHQASGGIVLLGATVLALVLANSPWSGQYFHFWEIKLTIGFDHFGLTQTLHHWINDGLMAVFFFLVGLELKREFMDGELASFRQAMLPIAAAFGGMLVPALIFHFINPMVPEAKGWGIPMATDIAFALGVLALLRGKISRSLAIFLTALAIVDDLGAVLVIALFYSGELAVGKLLVALVLLLILIAGNRLGVQSLNFYGLLGFCLWVVLLKSGLHASIAGVLIGMVIPARPRLCHEEFVDQTEKYMARYKEIGEVPGPFHHEERLGALLALEHICHDAMSSLQRMEHELHHWVIFGVIPIFALANAGLVLQLGNLVTAVTHPVTLGVALGLLLGKPLGILFFSWISVRVGLCALPRGTSWMDVFGVGILGGIGFTMSLFISNLAFMNIVMSNNAKLGIFIASMLAGAAGFTVLSRASARKAH.

A run of 11 helical transmembrane segments spans residues 21–41, 66–86, 102–122, 130–150, 160–180, 183–203, 206–226, 308–328, 341–361, 376–396, and 410–430; these read SGGI…NSPW, LHHW…GLEL, MLPI…FHFI, KGWG…LALL, IFLT…IALF, GELA…LIAG, LGVQ…VVLL, WVIF…VLQL, LGVA…FSWI, WMDV…SLFI, and AKLG…TVLS.

Belongs to the NhaA Na(+)/H(+) (TC 2.A.33) antiporter family.

It localises to the cell inner membrane. It catalyses the reaction Na(+)(in) + 2 H(+)(out) = Na(+)(out) + 2 H(+)(in). Its function is as follows. Na(+)/H(+) antiporter that extrudes sodium in exchange for external protons. The protein is Na(+)/H(+) antiporter NhaA 2 of Syntrophotalea carbinolica (strain DSM 2380 / NBRC 103641 / GraBd1) (Pelobacter carbinolicus).